Here is a 483-residue protein sequence, read N- to C-terminus: Glutamyl-tRNA(Gln) amidotransferase subunit A (483 aa).

Catalysis depends on charge relay system residues K76 and S151. Catalysis depends on S175, which acts as the Acyl-ester intermediate.

Belongs to the amidase family. GatA subfamily. In terms of assembly, heterotrimer of A, B and C subunits.

The enzyme catalyses L-glutamyl-tRNA(Gln) + L-glutamine + ATP + H2O = L-glutaminyl-tRNA(Gln) + L-glutamate + ADP + phosphate + H(+). Allows the formation of correctly charged Gln-tRNA(Gln) through the transamidation of misacylated Glu-tRNA(Gln) in organisms which lack glutaminyl-tRNA synthetase. The reaction takes place in the presence of glutamine and ATP through an activated gamma-phospho-Glu-tRNA(Gln). The sequence is that of Glutamyl-tRNA(Gln) amidotransferase subunit A from Coxiella burnetii (strain CbuK_Q154) (Coxiella burnetii (strain Q154)).